The following is a 282-amino-acid chain: Ribosome biogenesis GTPase A (282 aa).

Positions Arg-14 to Pro-178 constitute a CP-type G domain. Residues Asn-58–Asp-61, Asn-86–Ser-87, Asn-130–Thr-135, and Gly-174 each bind GTP.

It belongs to the TRAFAC class YlqF/YawG GTPase family. MTG1 subfamily. Interacts with ctc. Interacts with the immature 50S ribosome subunit. 2 molecules of rbgA bind to one 50S subunit.

Its subcellular location is the cytoplasm. Its function is as follows. Essential protein that is required for a late step of 50S ribosomal subunit assembly. Has GTPase activity that is stimulated by interaction with the immature 50S ribosome subunit. Binds to the 23S rRNA. Required for the association of ribosomal proteins rplP and rpmA with the large subunit. This chain is Ribosome biogenesis GTPase A, found in Bacillus pumilus (strain SAFR-032).